The following is a 105-amino-acid chain: Iron-sulfur cluster assembly protein CyaY (105 aa).

This sequence belongs to the frataxin family.

Involved in iron-sulfur (Fe-S) cluster assembly. May act as a regulator of Fe-S biogenesis. The polypeptide is Iron-sulfur cluster assembly protein CyaY (Paraburkholderia xenovorans (strain LB400)).